A 443-amino-acid polypeptide reads, in one-letter code: Elongation factor 1-alpha (443 aa).

The region spanning 5-228 (KTHINLVVIG…DTMQPPKRPY (224 aa)) is the tr-type G domain. The interval 14–21 (GHVDSGKS) is G1. Residue 14–21 (GHVDSGKS) participates in GTP binding. Positions 70-74 (GITID) are G2. The segment at 91-94 (DAPG) is G3. Residues 91 to 95 (DAPGH) and 153 to 156 (NKMD) contribute to the GTP site. The tract at residues 153–156 (NKMD) is G4. The tract at residues 192–194 (SGF) is G5.

The protein belongs to the TRAFAC class translation factor GTPase superfamily. Classic translation factor GTPase family. EF-Tu/EF-1A subfamily.

It is found in the cytoplasm. Functionally, this protein promotes the GTP-dependent binding of aminoacyl-tRNA to the A-site of ribosomes during protein biosynthesis. The chain is Elongation factor 1-alpha (MEF-1) from Plasmodium falciparum (isolate K1 / Thailand).